The sequence spans 229 residues: Pdp3-interacting factor 1 (229 aa).

The active-site Nucleophile is aspartate 12. The Mg(2+) site is built by aspartate 12, aspartate 14, and aspartate 176. The Proton donor role is filled by aspartate 14.

It belongs to the HAD-like hydrolase superfamily. As to quaternary structure, component of the mst2 complex composed of at least eaf6, mst2, nto1, pdp3, ptf1, ptf2 and tfg3. Mg(2+) serves as cofactor.

The protein localises to the cytoplasm. It is found in the nucleus. It catalyses the reaction D-ribitol 5-phosphate + H2O = ribitol + phosphate. The enzyme catalyses D-sorbitol 6-phosphate + H2O = D-sorbitol + phosphate. It carries out the reaction sn-glycerol 1-phosphate + H2O = glycerol + phosphate. The catalysed reaction is D-erythrose 4-phosphate + H2O = D-erythrose + phosphate. Functionally, component of the mst2 complex which is a highly specific H3 lysine 14 (H3K14) acetyltransferase that functions together with gcn5 to regulate global levels of H3K14 acetylation (H3K14ac), critical for DNA damage checkpoint activation. Its function is as follows. May also function as a sugar alcohol (polyol) phosphatase that prevents accumulation of toxic levels of polyol phosphates, which can impair glycolysis by inhibiting glucose-6-phosphate isomerase. The protein is Pdp3-interacting factor 1 of Schizosaccharomyces pombe (strain 972 / ATCC 24843) (Fission yeast).